The sequence spans 565 residues: Beta-hexosaminidase subunit beta (565 aa).

An N-terminal signal peptide occupies residues 1–13 (MIVLLLLISYCFA). Asparagine 71 carries an N-linked (GlcNAc...) asparagine glycan. Glutamate 347 (proton donor) is an active-site residue.

Belongs to the glycosyl hydrolase 20 family. Heterodimer of one alpha subunit and one beta subunit. Glycosylated.

The protein localises to the cytoplasmic granule. It is found in the secreted. It catalyses the reaction Hydrolysis of terminal non-reducing N-acetyl-D-hexosamine residues in N-acetyl-beta-D-hexosaminides.. In terms of biological role, hydrolyzes the non-reducing end N-acetyl-D-hexosamine and/or sulfated N-acetyl-D-hexosamine of glycoconjugates. May contribute to amoebic pathogenicity and may be involved in the destruction of extracellular matrix components. In Entamoeba histolytica (strain ATCC 30459 / HM-1:IMSS / ABRM), this protein is Beta-hexosaminidase subunit beta.